We begin with the raw amino-acid sequence, 232 residues long: Large ribosomal subunit protein uL1 (232 aa).

Belongs to the universal ribosomal protein uL1 family. As to quaternary structure, part of the 50S ribosomal subunit.

Its function is as follows. Binds directly to 23S rRNA. The L1 stalk is quite mobile in the ribosome, and is involved in E site tRNA release. In terms of biological role, protein L1 is also a translational repressor protein, it controls the translation of the L11 operon by binding to its mRNA. In Paraburkholderia phytofirmans (strain DSM 17436 / LMG 22146 / PsJN) (Burkholderia phytofirmans), this protein is Large ribosomal subunit protein uL1.